The following is a 165-amino-acid chain: Cytochrome c-type biogenesis protein CcmE (165 aa).

The Cytoplasmic portion of the chain corresponds to 1 to 7; that stretch reads MTRKQKR. The helical; Signal-anchor for type II membrane protein transmembrane segment at 8–28 threads the bilayer; that stretch reads LAVIAGGMGFIIAAVLLVMFA. Over 29 to 165 the chain is Periplasmic; it reads FSQSVAYFYM…GQGQEAKATR (137 aa). Histidine 124 and tyrosine 128 together coordinate heme. Positions 144–154 are enriched in low complexity; that stretch reads QDGQGAQSQAG. The segment at 144–165 is disordered; the sequence is QDGQGAQSQAGQGQGQEAKATR.

This sequence belongs to the CcmE/CycJ family.

Its subcellular location is the cell inner membrane. In terms of biological role, heme chaperone required for the biogenesis of c-type cytochromes. Transiently binds heme delivered by CcmC and transfers the heme to apo-cytochromes in a process facilitated by CcmF and CcmH. This chain is Cytochrome c-type biogenesis protein CcmE, found in Rhizobium etli (strain CIAT 652).